A 312-amino-acid chain; its full sequence is Acetyl-coenzyme A carboxylase carboxyl transferase subunit alpha (312 aa).

The region spanning 36-286 is the CoA carboxyltransferase C-terminal domain; that stretch reads RLDKEVKSIY…KEYFLDALRT (251 aa).

The protein belongs to the AccA family. In terms of assembly, acetyl-CoA carboxylase is a heterohexamer composed of biotin carboxyl carrier protein (AccB), biotin carboxylase (AccC) and two subunits each of ACCase subunit alpha (AccA) and ACCase subunit beta (AccD).

The protein resides in the cytoplasm. The catalysed reaction is N(6)-carboxybiotinyl-L-lysyl-[protein] + acetyl-CoA = N(6)-biotinyl-L-lysyl-[protein] + malonyl-CoA. The protein operates within lipid metabolism; malonyl-CoA biosynthesis; malonyl-CoA from acetyl-CoA: step 1/1. Component of the acetyl coenzyme A carboxylase (ACC) complex. First, biotin carboxylase catalyzes the carboxylation of biotin on its carrier protein (BCCP) and then the CO(2) group is transferred by the carboxyltransferase to acetyl-CoA to form malonyl-CoA. The polypeptide is Acetyl-coenzyme A carboxylase carboxyl transferase subunit alpha (Helicobacter pylori (strain ATCC 700392 / 26695) (Campylobacter pylori)).